The primary structure comprises 147 residues: UPF0735 ACT domain-containing protein BH1214 (147 aa).

The region spanning 70-145 (TLSINLEDRS…AVEKVELVGS (76 aa)) is the ACT domain.

Belongs to the UPF0735 family.

In Halalkalibacterium halodurans (strain ATCC BAA-125 / DSM 18197 / FERM 7344 / JCM 9153 / C-125) (Bacillus halodurans), this protein is UPF0735 ACT domain-containing protein BH1214.